We begin with the raw amino-acid sequence, 377 residues long: Presenilin-associated rhomboid-like protein, mitochondrial (377 aa).

A mitochondrion-targeting transit peptide spans 1–52; that stretch reads MAWRGWAQRGWGCGQAWTLPVCGGSYEELTAALAPSRLLRRRFNFFIQQKCG. Over 53-99 the chain is Mitochondrial matrix; sequence FRKAPRKVEPRRSDTSSEAYKRSALIPPVEETAFYPSPYPIRTLVKP. Phosphoserine occurs at positions 65 and 68. The chain crosses the membrane as a helical span at residues 100-119; it reads LFFTVGFTGCAFGSAAIWQY. Residues 120 to 165 are Mitochondrial intermembrane-facing; it reads ESLKSKVQSYFDGIKADWLDSIRPQKEGDFRKEINKWWNNLSDGQR. Residues 166–185 traverse the membrane as a helical segment; the sequence is TVTGIIAANVFVFCLWRVPS. Residues 186 to 205 lie on the Mitochondrial matrix side of the membrane; it reads LQRTMIRYFTSNPASKVLCS. A helical membrane pass occupies residues 206-228; it reads PMLLSTFSHFSLFHMAANMYVLW. Over 229–242 the chain is Mitochondrial intermembrane; it reads SFSSSIVNILGQEQ. Residues 243 to 260 traverse the membrane as a helical segment; the sequence is FMAVYLSAGVISTFVSYV. Over 261–270 the chain is Mitochondrial matrix; that stretch reads CKVATGRYGP. A helical transmembrane segment spans residues 271-287; the sequence is SLGASGAIMTVLAAVCT. The active-site Nucleophile is Ser275. At 288–293 the chain is on the mitochondrial intermembrane side; it reads KIPEGR. The chain crosses the membrane as a helical span at residues 294–316; the sequence is LAIIFLPMFTFTAGNALKAIIAM. Over 317–330 the chain is Mitochondrial matrix; it reads DTAGMILGWKFFDH. A helical membrane pass occupies residues 331–352; it reads AAHLGGALFGIWYITYGHELIW. Residue His333 is part of the active site. The Mitochondrial intermembrane segment spans residues 353-377; that stretch reads KNREPLVKIWHEMRTNSPKKGGGSK.

It belongs to the peptidase S54 family. Interacts with PSEN1 and PSEN2. Binds OPA1. In terms of processing, P-beta is proteolytically processed (beta-cleavage) in a PARL-dependent manner.

It is found in the mitochondrion inner membrane. The protein localises to the nucleus. The enzyme catalyses Cleaves type-1 transmembrane domains using a catalytic dyad composed of serine and histidine that are contributed by different transmembrane domains.. Its function is as follows. Required for the control of apoptosis during postnatal growth. Essential for proteolytic processing of an antiapoptotic form of OPA1 which prevents the release of mitochondrial cytochrome c in response to intrinsic apoptotic signals. Required for the maturation of PINK1 into its 52kDa mature form after its cleavage by mitochondrial-processing peptidase (MPP). Promotes cleavage of serine/threonine-protein phosphatase PGAM5 in damaged mitochondria in response to loss of mitochondrial membrane potential. Mediates differential cleavage of PINK1 and PGAM5 depending on the health status of mitochondria, disassociating from PINK1 and associating with PGAM5 in response to mitochondrial membrane potential loss. Required for processing of CLPB into a form with higher protein disaggregase activity by removing an autoinhibitory N-terminal peptide. Promotes processing of DIABLO/SMAC in the mitochondrion which is required for DIABLO apoptotic activity. Also required for cleavage of STARD7 and TTC19. Promotes changes in mitochondria morphology regulated by phosphorylation of P-beta domain. In Bos taurus (Bovine), this protein is Presenilin-associated rhomboid-like protein, mitochondrial (PARL).